A 192-amino-acid polypeptide reads, in one-letter code: Peptidyl-tRNA hydrolase (192 aa).

Tyrosine 17 serves as a coordination point for tRNA. Histidine 22 serves as the catalytic Proton acceptor. Residues tyrosine 68, asparagine 70, and asparagine 116 each contribute to the tRNA site.

It belongs to the PTH family. Monomer.

The protein resides in the cytoplasm. The catalysed reaction is an N-acyl-L-alpha-aminoacyl-tRNA + H2O = an N-acyl-L-amino acid + a tRNA + H(+). In terms of biological role, hydrolyzes ribosome-free peptidyl-tRNAs (with 1 or more amino acids incorporated), which drop off the ribosome during protein synthesis, or as a result of ribosome stalling. Catalyzes the release of premature peptidyl moieties from peptidyl-tRNA molecules trapped in stalled 50S ribosomal subunits, and thus maintains levels of free tRNAs and 50S ribosomes. This is Peptidyl-tRNA hydrolase from Mycobacterium sp. (strain JLS).